The chain runs to 319 residues: Acetyl-coenzyme A carboxylase carboxyl transferase subunit alpha (319 aa).

The region spanning 39–296 (EINRLRSKSI…KTQLLLDLTE (258 aa)) is the CoA carboxyltransferase C-terminal domain.

It belongs to the AccA family. Acetyl-CoA carboxylase is a heterohexamer composed of biotin carboxyl carrier protein (AccB), biotin carboxylase (AccC) and two subunits each of ACCase subunit alpha (AccA) and ACCase subunit beta (AccD).

It localises to the cytoplasm. It carries out the reaction N(6)-carboxybiotinyl-L-lysyl-[protein] + acetyl-CoA = N(6)-biotinyl-L-lysyl-[protein] + malonyl-CoA. The protein operates within lipid metabolism; malonyl-CoA biosynthesis; malonyl-CoA from acetyl-CoA: step 1/1. In terms of biological role, component of the acetyl coenzyme A carboxylase (ACC) complex. First, biotin carboxylase catalyzes the carboxylation of biotin on its carrier protein (BCCP) and then the CO(2) group is transferred by the carboxyltransferase to acetyl-CoA to form malonyl-CoA. In Blochmanniella pennsylvanica (strain BPEN), this protein is Acetyl-coenzyme A carboxylase carboxyl transferase subunit alpha.